Reading from the N-terminus, the 778-residue chain is GRIP and coiled-coil domain-containing protein 1 (778 aa).

A coiled-coil region spans residues 13-61 (SKKDLLETIETQKKQLLQYQARLKDVVRAYKSLLKEKEALEASIKVLSV). Disordered regions lie at residues 70–157 (SGVQ…MDKR), 186–208 (YLADKKKMKQDLEDANKKAEEER), and 617–638 (GRRSPVGGVGGGGLGDPADTAS). Residues 83-93 (VDDRCSTHSED) are compositionally biased toward basic and acidic residues. Composition is skewed to low complexity over residues 94-109 (STGTATSLDTAASLTS) and 133-152 (ASGSESGVSSSSGDGPSAGS). The stretch at 152–702 (SEMDKRVHQL…EEGERHREEV (551 aa)) forms a coiled coil. Residues 716–766 (QSREGANLEYLKNIIYRFLTLPDSLGRQQTLTAILTILHFSPEEKQVLMRL) enclose the GRIP domain.

Its subcellular location is the cytoplasm. It is found in the golgi apparatus membrane. In terms of biological role, probably involved in maintaining Golgi structure. In Mus musculus (Mouse), this protein is GRIP and coiled-coil domain-containing protein 1 (Gcc1).